A 362-amino-acid polypeptide reads, in one-letter code: Probable S-adenosylmethionine-dependent methyltransferase At5g37970 (362 aa).

S-adenosyl-L-homocysteine contacts are provided by tyrosine 19, cysteine 66, asparagine 71, aspartate 107, serine 136, and phenylalanine 137. Positions 175, 261, and 263 each coordinate Mg(2+).

This sequence belongs to the methyltransferase superfamily. Type-7 methyltransferase family. In terms of assembly, homodimer. Mg(2+) serves as cofactor.

In Arabidopsis thaliana (Mouse-ear cress), this protein is Probable S-adenosylmethionine-dependent methyltransferase At5g37970.